Consider the following 333-residue polypeptide: Protoheme IX farnesyltransferase (333 aa).

Over residues 1 to 13 (MVSSTSQIISTSP) the composition is skewed to low complexity. Residues 1–21 (MVSSTSQIISTSPSRDDVVPS) form a disordered region. The next 8 membrane-spanning stretches (helical) occupy residues 38 to 58 (LIPL…GWPL), 63 to 83 (LACT…LNCL), 109 to 129 (AVFT…VSGV), 132 to 152 (LAAG…TAFL), 160 to 180 (IVIG…AATG), 188 to 208 (WLFA…AILL), 245 to 265 (CFGV…LVPF), and 286 to 306 (AKGL…LLVV).

The protein belongs to the UbiA prenyltransferase family. Protoheme IX farnesyltransferase subfamily.

Its subcellular location is the cell inner membrane. The enzyme catalyses heme b + (2E,6E)-farnesyl diphosphate + H2O = Fe(II)-heme o + diphosphate. The protein operates within porphyrin-containing compound metabolism; heme O biosynthesis; heme O from protoheme: step 1/1. Converts heme B (protoheme IX) to heme O by substitution of the vinyl group on carbon 2 of heme B porphyrin ring with a hydroxyethyl farnesyl side group. This is Protoheme IX farnesyltransferase from Prochlorococcus marinus (strain SARG / CCMP1375 / SS120).